Reading from the N-terminus, the 569-residue chain is Isochorismate synthase 1, chloroplastic (569 aa).

The N-terminal 45 residues, 1–45 (MASLQFSSQFLGSNTKTHSSIISISRSYSPTPFTRFSRKKYESCS), are a transit peptide targeting the chloroplast.

The protein belongs to the isochorismate synthase family. Monomer. The cofactor is Mg(2+). Leaves.

The protein localises to the plastid. Its subcellular location is the chloroplast. It catalyses the reaction chorismate = isochorismate. The protein operates within siderophore biosynthesis; salicylate biosynthesis. In terms of biological role, isochorismate synthase involved in the synthesis of salicylic acid (SA) required for both local and systemic acquired resistance (LAR and SAR) while SA synthesized through the phenylalanine ammonium lyase (PAL) pathway seems to potentiate plant cell death. Also involved in phylloquinone (vitamin K1) synthesis. Has no isochorismate pyruvate lyase (IPL) activity. The polypeptide is Isochorismate synthase 1, chloroplastic (ICS1) (Arabidopsis thaliana (Mouse-ear cress)).